A 496-amino-acid chain; its full sequence is Protein nucleotidyltransferase YdiU (496 aa).

Residues Gly98, Gly100, Arg101, Lys116, Asp128, Gly129, Arg179, and Arg186 each contribute to the ATP site. Catalysis depends on Asp259, which acts as the Proton acceptor. Positions 260 and 269 each coordinate Mg(2+). Residue Asp269 coordinates ATP.

This sequence belongs to the SELO family. Mg(2+) serves as cofactor. It depends on Mn(2+) as a cofactor.

It catalyses the reaction L-seryl-[protein] + ATP = 3-O-(5'-adenylyl)-L-seryl-[protein] + diphosphate. The enzyme catalyses L-threonyl-[protein] + ATP = 3-O-(5'-adenylyl)-L-threonyl-[protein] + diphosphate. It carries out the reaction L-tyrosyl-[protein] + ATP = O-(5'-adenylyl)-L-tyrosyl-[protein] + diphosphate. The catalysed reaction is L-histidyl-[protein] + UTP = N(tele)-(5'-uridylyl)-L-histidyl-[protein] + diphosphate. It catalyses the reaction L-seryl-[protein] + UTP = O-(5'-uridylyl)-L-seryl-[protein] + diphosphate. The enzyme catalyses L-tyrosyl-[protein] + UTP = O-(5'-uridylyl)-L-tyrosyl-[protein] + diphosphate. In terms of biological role, nucleotidyltransferase involved in the post-translational modification of proteins. It can catalyze the addition of adenosine monophosphate (AMP) or uridine monophosphate (UMP) to a protein, resulting in modifications known as AMPylation and UMPylation. In Albidiferax ferrireducens (strain ATCC BAA-621 / DSM 15236 / T118) (Rhodoferax ferrireducens), this protein is Protein nucleotidyltransferase YdiU.